The following is a 154-amino-acid chain: Prefoldin subunit 5 (154 aa).

Alanine 2 carries the N-acetylalanine modification. Lysine 42 is subject to N6-acetyllysine. Phosphoserine is present on serine 56.

Belongs to the prefoldin subunit alpha family. As to quaternary structure, heterohexamer of two PFD-alpha type and four PFD-beta type subunits.

Its subcellular location is the nucleus. In terms of biological role, binds specifically to cytosolic chaperonin (c-CPN) and transfers target proteins to it. Binds to nascent polypeptide chain and promotes folding in an environment in which there are many competing pathways for nonnative proteins. Represses the transcriptional activity of MYC. The protein is Prefoldin subunit 5 (PFDN5) of Pongo abelii (Sumatran orangutan).